The following is a 325-amino-acid chain: Malate dehydrogenase (325 aa).

11–17 is an NAD(+) binding site; that stretch reads GAAGHVS. Residues Arg-92 and Arg-98 each contribute to the substrate site. NAD(+) is bound by residues Asn-105, Gln-112, and 129 to 131; that span reads VGN. Positions 131 and 162 each coordinate substrate. His-187 functions as the Proton acceptor in the catalytic mechanism.

It belongs to the LDH/MDH superfamily. MDH type 2 family.

The enzyme catalyses (S)-malate + NAD(+) = oxaloacetate + NADH + H(+). In terms of biological role, catalyzes the reversible oxidation of malate to oxaloacetate. The chain is Malate dehydrogenase from Desulfotalea psychrophila (strain LSv54 / DSM 12343).